The sequence spans 201 residues: Glutathione peroxidase 1 (201 aa).

S32 carries the phosphoserine modification. The active site involves U47. U47 is a non-standard amino acid (selenocysteine). 3 positions are modified to N6-acetyllysine; alternate: K86, K112, and K146. 3 positions are modified to N6-succinyllysine; alternate: K86, K112, and K146. Phosphoserine is present on residues S195 and S199.

This sequence belongs to the glutathione peroxidase family. As to quaternary structure, homotetramer. Interacts with MIEN1. In terms of processing, during periods of oxidative stress, Sec-47 may react with a superoxide radical, irreversibly lose hydroselenide and be converted to dehydroalanine.

It is found in the cytoplasm. The protein localises to the mitochondrion. The enzyme catalyses 2 glutathione + H2O2 = glutathione disulfide + 2 H2O. It carries out the reaction a hydroperoxy polyunsaturated fatty acid + 2 glutathione = a hydroxy polyunsaturated fatty acid + glutathione disulfide + H2O. It catalyses the reaction tert-butyl hydroperoxide + 2 glutathione = tert-butanol + glutathione disulfide + H2O. The catalysed reaction is cumene hydroperoxide + 2 glutathione = 2-phenylpropan-2-ol + glutathione disulfide + H2O. The enzyme catalyses (13S)-hydroperoxy-(9Z,11E)-octadecadienoate + 2 glutathione = (13S)-hydroxy-(9Z,11E)-octadecadienoate + glutathione disulfide + H2O. It carries out the reaction (9S)-hydroperoxy-(10E,12Z)-octadecadienoate + 2 glutathione = (9S)-hydroxy-(10E,12Z)-octadecadienoate + glutathione disulfide + H2O. It catalyses the reaction (5S)-hydroperoxy-(6E,8Z,11Z,14Z)-eicosatetraenoate + 2 glutathione = (5S)-hydroxy-(6E,8Z,11Z,14Z)-eicosatetraenoate + glutathione disulfide + H2O. The catalysed reaction is (12S)-hydroperoxy-(5Z,8Z,10E,14Z)-eicosatetraenoate + 2 glutathione = (12S)-hydroxy-(5Z,8Z,10E,14Z)-eicosatetraenoate + glutathione disulfide + H2O. The enzyme catalyses (12R)-hydroperoxy-(5Z,8Z,10E,14Z)-eicosatetraenoate + 2 glutathione = (12R)-hydroxy-(5Z,8Z,10E,14Z)-eicosatetraenoate + glutathione disulfide + H2O. It carries out the reaction (15S)-hydroperoxy-(5Z,8Z,11Z,13E)-eicosatetraenoate + 2 glutathione = (15S)-hydroxy-(5Z,8Z,11Z,13E)-eicosatetraenoate + glutathione disulfide + H2O. It catalyses the reaction (5S)-hydroperoxy-(6E,8Z,11Z,14Z,17Z)-eicosapentaenoate + 2 glutathione = (5S)-hydroxy-(6E,8Z,11Z,14Z,17Z)-eicosapentaenoate + glutathione disulfide + H2O. The catalysed reaction is (12S)-hydroperoxy-(5Z,8Z,10E,14Z,17Z)-eicosapentaenoate + 2 glutathione = (12S)-hydroxy-(5Z,8Z,10E,14Z,17Z)-eicosapentaenoate + glutathione disulfide + H2O. The enzyme catalyses (15S)-hydroperoxy-(5Z,8Z,11Z,13E,17Z)-eicosapentaenoate + 2 glutathione = (15S)-hydroxy-(5Z,8Z,11Z,13E,17Z)-eicosapentaenoate + glutathione disulfide + H2O. It carries out the reaction (15S)-hydroperoxy-(11Z,13E)-eicosadienoate + 2 glutathione = (15S)-hydroxy-(11Z,13E)-eicosadienoate + glutathione disulfide + H2O. It catalyses the reaction (17S)-hydroperoxy-(4Z,7Z,10Z,13Z,15E,19Z)-docosahexaenoate + 2 glutathione = (17S)-hydroxy-(4Z,7Z,10Z,13Z,15E,19Z)-docosahexaenoate + glutathione disulfide + H2O. Catalyzes the reduction of hydroperoxides in a glutathione-dependent manner thus regulating cellular redox homeostasis. Can reduce small soluble hydroperoxides such as H2O2, cumene hydroperoxide and tert-butyl hydroperoxide, as well as several fatty acid-derived hydroperoxides. In platelets catalyzes the reduction of 12-hydroperoxyeicosatetraenoic acid, the primary product of the arachidonate 12-lipoxygenase pathway. This is Glutathione peroxidase 1 (GPX1) from Callithrix jacchus (White-tufted-ear marmoset).